Reading from the N-terminus, the 452-residue chain is Mitochondrial import inner membrane translocase subunit TIM50 (452 aa).

The N-terminal 23 residues, 1-23 (MSLSKLTQTCFSRHQAKTFIRLY), are a transit peptide targeting the mitochondrion. Over 24 to 167 (SSDFKSLLGP…RRKRMERNTR (144 aa)) the chain is Mitochondrial matrix. 2 disordered regions span residues 96–115 (IEAE…TSSA) and 130–153 (ESAA…GNAE). Low complexity predominate over residues 131–144 (SAASKSSSSSGGSS). A helical membrane pass occupies residues 168–188 (IGAYVLFGGSIIGFISFCFYY). The Mitochondrial intermembrane segment spans residues 189-452 (GRAQRDEFGN…LFGSRRHVNA (264 aa)). The region spanning 243-387 (YLQPKYTIVI…VDLAELLKTI (145 aa)) is the FCP1 homology domain.

Belongs to the TIM50 family.

Its subcellular location is the mitochondrion inner membrane. Functionally, essential component of the TIM23 complex, a complex that mediates the translocation of transit peptide-containing proteins across the mitochondrial inner membrane. The polypeptide is Mitochondrial import inner membrane translocase subunit TIM50 (scpl-4) (Caenorhabditis elegans).